Reading from the N-terminus, the 406-residue chain is uncharacterized protein (406 aa).

5 helical membrane-spanning segments follow: residues 7 to 27, 31 to 51, 65 to 85, 92 to 112, and 191 to 211; these read LCTN…YYLF, YFNI…YGSV, LIFI…SEII, IFYF…SFIL, and ISLI…SSFF. A disordered region spans residues 259 to 331; the sequence is TLNVPISTNN…TGTNNNVVDN (73 aa). Residues 262 to 291 show a composition bias toward polar residues; the sequence is VPISTNNTDNLNSVKTNQQFNTPVAKSNTK. Positions 292 to 303 are enriched in basic residues; it reads SNRRKKTGKKIR. The span at 306–318 shows a compositional bias: low complexity; the sequence is NQTTSSNSSNNQS. A compositionally biased stretch (polar residues) spans 319–330; that stretch reads PESTGTNNNVVD.

The protein resides in the membrane. This is an uncharacterized protein from Acanthamoeba polyphaga (Amoeba).